Here is a 367-residue protein sequence, read N- to C-terminus: Peptide chain release factor 2 (367 aa).

Q254 carries the N5-methylglutamine modification.

The protein belongs to the prokaryotic/mitochondrial release factor family. Methylated by PrmC. Methylation increases the termination efficiency of RF2.

It localises to the cytoplasm. Peptide chain release factor 2 directs the termination of translation in response to the peptide chain termination codons UGA and UAA. The protein is Peptide chain release factor 2 of Leptospira interrogans serogroup Icterohaemorrhagiae serovar copenhageni (strain Fiocruz L1-130).